A 693-amino-acid chain; its full sequence is MAREFSLEKTRNIGIMAHVDAGKTTTTERILYYTGKIHKIGETHEGASQMDWMEQEQERGITITSAATTAQWKDHRVNIIDTPGHVDFTIEVQRSLRVLDGAVTVLDAQSGVEPQTETVWRQATEYGVPRIVFANKMDKIGADFLYSVSTLHDRLQANAHPIQLPIGAEDDFEGIIDLVTMKAEIYTNDLGTDILIEDIPADYLDQAKEYREKLIEAVAETDEDLMMKYLEGEEITETELKAAIRKATINVEFFPVLAGSAFKNKGVQMMLDAVVDYLPSPLDIPPIKGVNPDTDEEEERPASDDEPFAALAFKIMTDPFVGRLTFFRVYSGILNSGSYVLNTSKGKRERIGRILQMHANSRQEIETVYAGDIAAAVGLKETTTGDSLTDEKAKVILESIEVPEPVIQLMVEPKSKADQDKMGIALQKLAEEDPTFRVETNVETGETVISGMGELHLDVLVDRMKREFKVEANVGAPQVSYRETFRQATQARGFFKRQSGGKGQFGDVWIEFTPNEEGKGFEFENAIVGGVVPREFVPAVEKGLIESMANGVLAGYPIVDVKAKLYDGSYHDVDSSETAFKIAASLALKEAAKTAKPVILEPMMLVTITVPEENLGDVMGHVTARRGRVDGMEAHGNSQIVRAFVPLAEMFGYATVLRSASQGRGTFMMVFDHYEDVPKSVQEEIIKKNAGEA.

One can recognise a tr-type G domain in the interval 8–282 (EKTRNIGIMA…AVVDYLPSPL (275 aa)). GTP contacts are provided by residues 17–24 (AHVDAGKT), 81–85 (DTPGH), and 135–138 (NKMD).

This sequence belongs to the TRAFAC class translation factor GTPase superfamily. Classic translation factor GTPase family. EF-G/EF-2 subfamily.

It localises to the cytoplasm. Functionally, catalyzes the GTP-dependent ribosomal translocation step during translation elongation. During this step, the ribosome changes from the pre-translocational (PRE) to the post-translocational (POST) state as the newly formed A-site-bound peptidyl-tRNA and P-site-bound deacylated tRNA move to the P and E sites, respectively. Catalyzes the coordinated movement of the two tRNA molecules, the mRNA and conformational changes in the ribosome. The polypeptide is Elongation factor G (Streptococcus mutans serotype c (strain ATCC 700610 / UA159)).